Here is a 115-residue protein sequence, read N- to C-terminus: U3-lycotoxin-Ls1l (115 aa).

The signal sequence occupies residues 1 to 20; sequence MKFVLLFGVLLVTLFSYSSA. A propeptide spanning residues 21-44 is cleaved from the precursor; it reads EMLDDFDQADEDELLSLIEKEEAR. 3 cysteine pairs are disulfide-bonded: C55-C72, C62-C87, and C74-C85.

The protein belongs to the neurotoxin 19 (CSTX) family. 01 subfamily. In terms of tissue distribution, expressed by the venom gland.

The protein resides in the secreted. The polypeptide is U3-lycotoxin-Ls1l (Lycosa singoriensis (Wolf spider)).